The primary structure comprises 63 residues: Hirudin-P6 (63 aa).

The tract at residues Met1–Tyr3 is interaction with thrombin active site. Disulfide bonds link Cys6–Cys14, Cys16–Cys28, and Cys22–Cys37. Residues Lys35 to Asp55 show a composition bias toward basic and acidic residues. Residues Lys35–Ser63 are disordered. O-linked (GalNAc...) threonine glycosylation is present at Thr43. The segment at Asp53–Ser63 is interaction with fibrinogen-binding exosite of thrombin. A Sulfotyrosine modification is found at Tyr61.

This sequence belongs to the protease inhibitor I14 (hirudin) family. Post-translationally, O-linked glycan consists of Fuc-Gal-GalNAc trisaccharide.

The protein localises to the secreted. Its function is as follows. Hirudin is a potent thrombin-specific protease inhibitor. It forms a stable non-covalent complex with alpha-thrombin, thereby abolishing its ability to cleave fibrinogen. The protein is Hirudin-P6 of Hirudinaria manillensis (Asian medical leech).